Here is a 582-residue protein sequence, read N- to C-terminus: Choline kinase (582 aa).

The tract at residues 1–36 is disordered; the sequence is MVQESRPGSVRSYSVGYQARSRSSSQRRHSLTRQRS. A Phosphoserine; by PKA modification is found at S30. A phosphoserine mark is found at S48 and S51. The residue at position 54 (T54) is a Phosphothreonine. S85 is subject to Phosphoserine; by PKA.

The protein belongs to the choline/ethanolamine kinase family. As to quaternary structure, monomer. Interacts with NAP1. Mg(2+) is required as a cofactor.

The protein resides in the cytoplasm. It catalyses the reaction choline + ATP = phosphocholine + ADP + H(+). It carries out the reaction ethanolamine + ATP = phosphoethanolamine + ADP + H(+). Its pathway is phospholipid metabolism; phosphatidylcholine biosynthesis; phosphocholine from choline: step 1/1. Its function is as follows. Catalyzes the committed step in the synthesis of phosphatidylcholine by the CDP-choline pathway. Also exhibits ethanolamine kinase activity but it is a poor substrate at 14% efficiency compared with choline. This Saccharomyces cerevisiae (strain ATCC 204508 / S288c) (Baker's yeast) protein is Choline kinase.